Consider the following 952-residue polypeptide: Serine/threonine-protein kinase atg1 (952 aa).

The Protein kinase domain maps to phenylalanine 23–valine 329. ATP-binding positions include isoleucine 29–valine 37 and lysine 52. Catalysis depends on aspartate 166, which acts as the Proton acceptor. 4 disordered regions span residues glutamate 331–glutamine 478, glycine 510–serine 573, arginine 783–serine 806, and alanine 920–lysine 952. Composition is skewed to basic and acidic residues over residues glycine 338–proline 347 and serine 356–threonine 372. Over residues serine 386–phenylalanine 398 the composition is skewed to polar residues. Residues proline 429 to glutamate 439 show a composition bias toward basic and acidic residues. 3 stretches are compositionally biased toward polar residues: residues alanine 459–glutamate 475, proline 553–serine 573, and asparagine 793–serine 806. The span at serine 933–lysine 952 shows a compositional bias: low complexity.

This sequence belongs to the protein kinase superfamily. Ser/Thr protein kinase family. APG1/unc-51/ULK1 subfamily. Homodimer. Forms a ternary complex with ATG13 and ATG17.

Its subcellular location is the cytoplasm. It localises to the preautophagosomal structure membrane. It catalyses the reaction L-seryl-[protein] + ATP = O-phospho-L-seryl-[protein] + ADP + H(+). The enzyme catalyses L-threonyl-[protein] + ATP = O-phospho-L-threonyl-[protein] + ADP + H(+). In terms of biological role, serine/threonine protein kinase involved in the cytoplasm to vacuole transport (Cvt) and found to be essential in autophagy, where it is required for the formation of autophagosomes. Involved in the clearance of protein aggregates which cannot be efficiently cleared by the proteasome. Required for selective autophagic degradation of the nucleus (nucleophagy) as well as for mitophagy which contributes to regulate mitochondrial quantity and quality by eliminating the mitochondria to a basal level to fulfill cellular energy requirements and preventing excess ROS production. Also involved in endoplasmic reticulum-specific autophagic process, in selective removal of ER-associated degradation (ERAD) substrates. Plays a key role in ATG9 and ATG23 cycling through the pre-autophagosomal structure and is necessary to promote ATG18 binding to ATG9 through phosphorylation of ATG9. Catalyzes phosphorylation of ATG4, decreasing the interaction between ATG4 and ATG8 and impairing deconjugation of PE-conjugated forms of ATG8. The sequence is that of Serine/threonine-protein kinase atg1 from Botryotinia fuckeliana (strain B05.10) (Noble rot fungus).